Reading from the N-terminus, the 208-residue chain is Uracil phosphoribosyltransferase (208 aa).

5-phospho-alpha-D-ribose 1-diphosphate contacts are provided by residues Arg78, Arg103, and Asp130–Ser138. Uracil-binding positions include Ile193 and Gly198–Ala200. Asp199 lines the 5-phospho-alpha-D-ribose 1-diphosphate pocket.

The protein belongs to the UPRTase family. It depends on Mg(2+) as a cofactor.

It carries out the reaction UMP + diphosphate = 5-phospho-alpha-D-ribose 1-diphosphate + uracil. Its pathway is pyrimidine metabolism; UMP biosynthesis via salvage pathway; UMP from uracil: step 1/1. With respect to regulation, allosterically activated by GTP. Its function is as follows. Catalyzes the conversion of uracil and 5-phospho-alpha-D-ribose 1-diphosphate (PRPP) to UMP and diphosphate. This chain is Uracil phosphoribosyltransferase, found in Neisseria meningitidis serogroup C (strain 053442).